The following is a 1149-amino-acid chain: DNA-directed RNA polymerase III subunit RPC2 (1149 aa).

Residues cysteine 1095, cysteine 1098, cysteine 1107, and cysteine 1110 each coordinate Zn(2+). Residues 1095–1110 (CDKCGLMGYSGWCTTC) form a C4-type zinc finger.

Belongs to the RNA polymerase beta chain family. In terms of assembly, component of the RNA polymerase III (Pol III) complex consisting of 17 subunits.

Its subcellular location is the nucleus. It catalyses the reaction RNA(n) + a ribonucleoside 5'-triphosphate = RNA(n+1) + diphosphate. Its function is as follows. DNA-dependent RNA polymerase catalyzes the transcription of DNA into RNA using the four ribonucleoside triphosphates as substrates. Second largest core component of RNA polymerase III which synthesizes small RNAs, such as 5S rRNA and tRNAs. Proposed to contribute to the polymerase catalytic activity and forms the polymerase active center together with the largest subunit. Pol III is composed of mobile elements and RPC2 is part of the core element with the central large cleft and probably a clamp element that moves to open and close the cleft. This chain is DNA-directed RNA polymerase III subunit RPC2 (RET1), found in Saccharomyces cerevisiae (strain ATCC 204508 / S288c) (Baker's yeast).